The sequence spans 222 residues: Probable transaldolase 2 (222 aa).

The active-site Schiff-base intermediate with substrate is the K90.

Belongs to the transaldolase family. Type 3B subfamily.

It localises to the cytoplasm. The catalysed reaction is D-sedoheptulose 7-phosphate + D-glyceraldehyde 3-phosphate = D-erythrose 4-phosphate + beta-D-fructose 6-phosphate. It participates in carbohydrate degradation; pentose phosphate pathway; D-glyceraldehyde 3-phosphate and beta-D-fructose 6-phosphate from D-ribose 5-phosphate and D-xylulose 5-phosphate (non-oxidative stage): step 2/3. Functionally, transaldolase is important for the balance of metabolites in the pentose-phosphate pathway. The protein is Probable transaldolase 2 of Bacillus anthracis.